A 162-amino-acid chain; its full sequence is Crossover junction endodeoxyribonuclease RuvC (162 aa).

Active-site residues include Asp-8, Glu-69, and His-141. Mg(2+) contacts are provided by Asp-8, Glu-69, and His-141.

Belongs to the RuvC family. Homodimer which binds Holliday junction (HJ) DNA. The HJ becomes 2-fold symmetrical on binding to RuvC with unstacked arms; it has a different conformation from HJ DNA in complex with RuvA. In the full resolvosome a probable DNA-RuvA(4)-RuvB(12)-RuvC(2) complex forms which resolves the HJ. It depends on Mg(2+) as a cofactor.

It localises to the cytoplasm. The enzyme catalyses Endonucleolytic cleavage at a junction such as a reciprocal single-stranded crossover between two homologous DNA duplexes (Holliday junction).. The RuvA-RuvB-RuvC complex processes Holliday junction (HJ) DNA during genetic recombination and DNA repair. Endonuclease that resolves HJ intermediates. Cleaves cruciform DNA by making single-stranded nicks across the HJ at symmetrical positions within the homologous arms, yielding a 5'-phosphate and a 3'-hydroxyl group; requires a central core of homology in the junction. The consensus cleavage sequence is 5'-(A/T)TT(C/G)-3'. Cleavage occurs on the 3'-side of the TT dinucleotide at the point of strand exchange. HJ branch migration catalyzed by RuvA-RuvB allows RuvC to scan DNA until it finds its consensus sequence, where it cleaves and resolves the cruciform DNA. The sequence is that of Crossover junction endodeoxyribonuclease RuvC from Wolbachia sp. subsp. Drosophila simulans (strain wRi).